We begin with the raw amino-acid sequence, 506 residues long: MGEIQGPVRVRFAPSPTGYLHIGGVRTALFNWLFARHHGGQFILRIEDTDEKRYVPGSADDLMASLRWVGIEWDEGPDIGGPYAPYVQSLRHEAGIYRPFVEQLLESGHAYMSFTTEEELERMRAEALAGGVKAFRFRGPERDWSLDRQREMAATGRPYTVRLKTPTEGVTAFRDLVRGGERIEFRNEELYDIVLVKSSGMPVYHLAHLVDDHLMRITHVLRSDEWVASTPYHVLLYQAFGWEMPAFAHLPPILRQDGRGKLSKRTDDVAANRFWERGYLPDAMFNYLALQGWSYDGYTEIMSREELIERFTLDRVQPSPARWNPEKLLDMNGIYIRRLKTEQLADAIAPFLARAGLIGDPPTPDERAYLVQLTPLIHERLKELGEAPELLEFFFREVTLPDPLLLIQKKMDAATTVAALEAAHARLAPLEPWTHDRLEAELRALCEELGLKAGQLFGAIRVAVTGRTVAPPLFDTLVALGKSRTLRRLEAARAALTTHAGANVQS.

Residues 14-24 (PSPTGYLHIGG) carry the 'HIGH' region motif. The 'KMSKS' region signature appears at 261–265 (KLSKR). Lys-264 lines the ATP pocket.

It belongs to the class-I aminoacyl-tRNA synthetase family. Glutamate--tRNA ligase type 1 subfamily. In terms of assembly, monomer.

Its subcellular location is the cytoplasm. It carries out the reaction tRNA(Glu) + L-glutamate + ATP = L-glutamyl-tRNA(Glu) + AMP + diphosphate. Its function is as follows. Catalyzes the attachment of glutamate to tRNA(Glu) in a two-step reaction: glutamate is first activated by ATP to form Glu-AMP and then transferred to the acceptor end of tRNA(Glu). The chain is Glutamate--tRNA ligase from Roseiflexus sp. (strain RS-1).